The primary structure comprises 62 residues: Sperm protamine P1 (62 aa).

The segment at 1–62 is disordered; the sequence is MARYRHSRSR…RYSRRRRRRY (62 aa).

This sequence belongs to the protamine P1 family. Testis.

It is found in the nucleus. It localises to the chromosome. Protamines substitute for histones in the chromatin of sperm during the haploid phase of spermatogenesis. They compact sperm DNA into a highly condensed, stable and inactive complex. The polypeptide is Sperm protamine P1 (PRM1) (Dorcopsulus vanheurni (Lesser forest wallaby)).